Consider the following 225-residue polypeptide: Uracil-DNA glycosylase (225 aa).

Asp65 functions as the Proton acceptor in the catalytic mechanism.

The protein belongs to the uracil-DNA glycosylase (UDG) superfamily. UNG family.

It localises to the cytoplasm. The enzyme catalyses Hydrolyzes single-stranded DNA or mismatched double-stranded DNA and polynucleotides, releasing free uracil.. Functionally, excises uracil residues from the DNA which can arise as a result of misincorporation of dUMP residues by DNA polymerase or due to deamination of cytosine. The protein is Uracil-DNA glycosylase of Bacillus cereus (strain ZK / E33L).